The chain runs to 215 residues: NAD(P)H-hydrate epimerase (215 aa).

Residues 10–212 enclose the YjeF N-terminal domain; it reads SRELDDKTIN…DIGIYRGNAF (203 aa). 59–63 contacts (6S)-NADPHX; sequence NNGGD. 2 residues coordinate K(+): Asn-60 and Asp-122. (6S)-NADPHX-binding positions include 126–132 and Asp-155; that span reads GSGLSRN. Ser-158 is a binding site for K(+).

Belongs to the NnrE/AIBP family. K(+) is required as a cofactor.

The enzyme catalyses (6R)-NADHX = (6S)-NADHX. The catalysed reaction is (6R)-NADPHX = (6S)-NADPHX. Its function is as follows. Catalyzes the epimerization of the S- and R-forms of NAD(P)HX, a damaged form of NAD(P)H that is a result of enzymatic or heat-dependent hydration. This is a prerequisite for the S-specific NAD(P)H-hydrate dehydratase to allow the repair of both epimers of NAD(P)HX. The polypeptide is NAD(P)H-hydrate epimerase (Lentilactobacillus buchneri (strain NRRL B-30929) (Lactobacillus buchneri)).